A 396-amino-acid chain; its full sequence is Elongation factor Tu (396 aa).

The region spanning 10-205 (KTHANIGTIG…AVDEYIPTPE (196 aa)) is the tr-type G domain. Residues 19–26 (GHVDHGKT) form a G1 region. Position 19–26 (19–26 (GHVDHGKT)) interacts with GTP. Mg(2+) is bound at residue T26. The interval 61–65 (GITIS) is G2. Residues 82–85 (DCPG) form a G3 region. GTP-binding positions include 82-86 (DCPGH) and 137-140 (NKCD). Residues 137-140 (NKCD) form a G4 region. Residues 175 to 177 (SAL) are G5.

This sequence belongs to the TRAFAC class translation factor GTPase superfamily. Classic translation factor GTPase family. EF-Tu/EF-1A subfamily. In terms of assembly, monomer.

Its subcellular location is the cytoplasm. It carries out the reaction GTP + H2O = GDP + phosphate + H(+). Functionally, GTP hydrolase that promotes the GTP-dependent binding of aminoacyl-tRNA to the A-site of ribosomes during protein biosynthesis. The sequence is that of Elongation factor Tu from Shouchella clausii (strain KSM-K16) (Alkalihalobacillus clausii).